Consider the following 85-residue polypeptide: Small ribosomal subunit protein bS16 (85 aa).

The protein belongs to the bacterial ribosomal protein bS16 family.

This is Small ribosomal subunit protein bS16 from Neorickettsia sennetsu (strain ATCC VR-367 / Miyayama) (Ehrlichia sennetsu).